Reading from the N-terminus, the 358-residue chain is Low-specificity L-threonine aldolase 1 (358 aa).

Lys207 is subject to N6-(pyridoxal phosphate)lysine.

This sequence belongs to the threonine aldolase family. The cofactor is pyridoxal 5'-phosphate. In terms of tissue distribution, expressed in root tips, seedlings, carpels and seeds.

It carries out the reaction L-threonine = acetaldehyde + glycine. The enzyme catalyses L-allo-threonine = acetaldehyde + glycine. The protein operates within amino-acid degradation; L-threonine degradation via aldolase pathway; acetaldehyde and glycine from L-threonine: step 1/1. Functionally, threonine aldolase involved in threonine degradation to glycine. May play a role in the removal of L-allo-threonine. The polypeptide is Low-specificity L-threonine aldolase 1 (Arabidopsis thaliana (Mouse-ear cress)).